The primary structure comprises 123 residues: Histone H2B.1, embryonic (123 aa).

Residues 1–32 (MAPTGQVAKKGSKKAVKPPRASGGKKRHRKRK) form a disordered region. Positions 10-32 (KGSKKAVKPPRASGGKKRHRKRK) are enriched in basic residues. S110 is a glycosylation site (O-linked (GlcNAc) serine). A Glycyl lysine isopeptide (Lys-Gly) (interchain with G-Cter in ubiquitin) cross-link involves residue K118.

The protein belongs to the histone H2B family. The nucleosome is a histone octamer containing two molecules each of H2A, H2B, H3 and H4 assembled in one H3-H4 heterotetramer and two H2A-H2B heterodimers. The octamer wraps approximately 147 bp of DNA. Monoubiquitination of Lys-118 gives a specific tag for epigenetic transcriptional activation and is also prerequisite for histone H3 'Lys-4' and 'Lys-79' methylation. Post-translationally, glcNAcylation at Ser-110 promotes monoubiquitination of Lys-118. It fluctuates in response to extracellular glucose, and associates with transcribed genes.

Its subcellular location is the nucleus. The protein localises to the chromosome. In terms of biological role, core component of nucleosome. Nucleosomes wrap and compact DNA into chromatin, limiting DNA accessibility to the cellular machineries which require DNA as a template. Histones thereby play a central role in transcription regulation, DNA repair, DNA replication and chromosomal stability. DNA accessibility is regulated via a complex set of post-translational modifications of histones, also called histone code, and nucleosome remodeling. This Psammechinus miliaris (Green sea urchin) protein is Histone H2B.1, embryonic.